The sequence spans 700 residues: ATP-dependent zinc metalloprotease FtsH (700 aa).

Residues 1–10 (MNNNKGGFLR) are Cytoplasmic-facing. A helical transmembrane segment spans residues 11–31 (SSVFYIFIFLAVVGMVYGLFG). Topologically, residues 32–130 (NDKTTTKTIT…LVTKQAENSG (99 aa)) are extracellular. Residues 131 to 151 (FWLNLLVSLVPVLLIVAVFYL) traverse the membrane as a helical segment. Residues 152–700 (MMNQAGGGKG…ETDDNNTENK (549 aa)) lie on the Cytoplasmic side of the membrane. 227 to 234 (GPPGTGKT) contributes to the ATP binding site. His-449 is a Zn(2+) binding site. Residue Glu-450 is part of the active site. Zn(2+) contacts are provided by His-453 and Asp-525. A disordered region spans residues 644-700 (KSFEEAKAAADAKDSQAEQRFEKQDEEKSSDDHSESKNEDTDSTDKSETDDNNTENK).

This sequence in the central section; belongs to the AAA ATPase family. In the C-terminal section; belongs to the peptidase M41 family. Homohexamer. The cofactor is Zn(2+).

Its subcellular location is the cell membrane. Acts as a processive, ATP-dependent zinc metallopeptidase for both cytoplasmic and membrane proteins. Plays a role in the quality control of integral membrane proteins. In Leuconostoc mesenteroides subsp. mesenteroides (strain ATCC 8293 / DSM 20343 / BCRC 11652 / CCM 1803 / JCM 6124 / NCDO 523 / NBRC 100496 / NCIMB 8023 / NCTC 12954 / NRRL B-1118 / 37Y), this protein is ATP-dependent zinc metalloprotease FtsH.